Reading from the N-terminus, the 187-residue chain is Large ribosomal subunit protein uL5 (187 aa).

It belongs to the universal ribosomal protein uL5 family. In terms of assembly, part of the 50S ribosomal subunit; part of the 5S rRNA/L5/L18/L25 subcomplex. Contacts the 5S rRNA and the P site tRNA. Forms a bridge to the 30S subunit in the 70S ribosome.

This is one of the proteins that bind and probably mediate the attachment of the 5S RNA into the large ribosomal subunit, where it forms part of the central protuberance. In the 70S ribosome it contacts protein S13 of the 30S subunit (bridge B1b), connecting the 2 subunits; this bridge is implicated in subunit movement. Contacts the P site tRNA; the 5S rRNA and some of its associated proteins might help stabilize positioning of ribosome-bound tRNAs. The polypeptide is Large ribosomal subunit protein uL5 (Brachyspira hyodysenteriae (strain ATCC 49526 / WA1)).